A 491-amino-acid polypeptide reads, in one-letter code: Delayed-rectifier potassium channel regulatory subunit KCNS3 (491 aa).

Topologically, residues 1 to 182 (MVFGEFFHRP…IRMENPAYCL (182 aa)) are cytoplasmic. A helical membrane pass occupies residues 183–204 (SAKLIAISSLSVVLASIVAMCV). Topologically, residues 205–220 (HSMSEFQNEDGEVDDP) are extracellular. The helical transmembrane segment at 221–243 (VLEGVEIACIAWFTGELAIRLVA) threads the bilayer. The Cytoplasmic segment spans residues 244 to 254 (APSQKKFWKNP). Residues 255–275 (LNIIDFVSIIPFYATLAVDTK) form a helical membrane-spanning segment. The Extracellular segment spans residues 276–285 (EEESEDIENM). Residues 286–306 (GKVVQILRLMRIFRILKLARH) form a helical; Voltage-sensor membrane-spanning segment. At 307-321 (SVGLRSLGATLRHSY) the chain is on the cytoplasmic side. The helical transmembrane segment at 322–343 (HEVGLLLLFLSVGISIFSVLIY) threads the bilayer. The Extracellular segment spans residues 344 to 357 (SVEKDELASSLTSI). The helical intramembrane region spans 358-369 (PICWWWATISMT). The Selectivity filter motif lies at 370-375 (TVGYGD). An intramembrane segment occupies 370-377 (TVGYGDTH). Topologically, residues 378 to 384 (PVTLAGK) are extracellular. A helical membrane pass occupies residues 385-413 (IIASTCIICGILVVALPITIIFNKFSKYY). Topologically, residues 414–491 (QKQKDMDVDQ…TASLENCTAK (78 aa)) are cytoplasmic.

This sequence belongs to the potassium channel family. S (TC 1.A.1.2) subfamily. Kv9.3/KCNS3 sub-subfamily. Heterotetramer with KCNB1. Does not form homomultimers. As to expression, expressed in myocytes. Detected in lung, spleen, brain and heart.

It localises to the cell membrane. Its function is as follows. Potassium channel regulatory subunit that modulates the delayed rectifier potassium channel activity of KCNB1 by namely slowing down the deactivation and inactivation time constants. While it does not form functional channel on its own, it can form functional heterotetrameric channels with KCNB1. This is Delayed-rectifier potassium channel regulatory subunit KCNS3 from Rattus norvegicus (Rat).